Here is a 700-residue protein sequence, read N- to C-terminus: Lutropin-choriogonadotropic hormone receptor (700 aa).

The signal sequence occupies residues 1–26; sequence MGRRVPALRQLLVLAMLVLKQSQLHS. At 27–362 the chain is on the extracellular side; it reads PELSGSRCPE…AFNPCEDIMG (336 aa). The LRR 1 repeat unit spans residues 52 to 75; that stretch reads RAGLARLSLTYLPVKVIPSQAFRG. N-linked (GlcNAc...) asparagine glycosylation occurs at Asn103. 3 LRR repeats span residues 126-150, 176-200, and 225-248; these read LPRL…KISS, MNNE…AFNG, and ATGP…GLES. N-linked (GlcNAc...) asparagine glycosylation is found at Asn178 and Asn199. 3 N-linked (GlcNAc...) asparagine glycosylation sites follow: Asn295, Asn303, and Asn317. Tyr335 is subject to Sulfotyrosine. The chain crosses the membrane as a helical span at residues 363–390; it reads YAFLRVLIWLINILAIFGNLTVLFVLLT. The Cytoplasmic segment spans residues 391–399; that stretch reads SRYKLTVPR. The chain crosses the membrane as a helical span at residues 400–422; the sequence is FLMCNLSFADFCMGLYLLLIASV. At 423–443 the chain is on the extracellular side; the sequence is DSQTKGQYYNHAIDWQTGSGC. Cys443 and Cys518 form a disulfide bridge. The helical transmembrane segment at 444–466 threads the bilayer; the sequence is SAAGFFTVFASELSVYTLTVITL. Residues 467 to 486 are Cytoplasmic-facing; the sequence is ERWHTITYAVQLDQKLRLRH. The helical transmembrane segment at 487 to 509 threads the bilayer; sequence AIPIMLGGWIFSTLMATLPLVGV. Topologically, residues 510–529 are extracellular; that stretch reads SSYMKVSICLPMDVESTLSQ. Residues 530-551 traverse the membrane as a helical segment; it reads VYILSILLLNAVAFVVICACYV. At 552-574 the chain is on the cytoplasmic side; that stretch reads RIYFAVQNPELTAPNKDTKIAKK. The helical transmembrane segment at 575–598 threads the bilayer; it reads MAILIFTDFTCMAPISFFAISAAF. Residues 599–609 are Extracellular-facing; sequence KVPLITVTNSK. A helical membrane pass occupies residues 610 to 631; it reads VLLVLFYPVNSCANPFLYAVFT. Over 632 to 700 the chain is Cytoplasmic; that stretch reads KAFQRDFFLL…QPTPPRVLIQ (69 aa). S-palmitoyl cysteine attachment occurs at residues Cys647 and Cys648.

This sequence belongs to the G-protein coupled receptor 1 family. FSH/LSH/TSH subfamily. Sulfated.

It localises to the cell membrane. In terms of biological role, receptor for lutropin-choriogonadotropic hormone. The activity of this receptor is mediated by G proteins which activate adenylate cyclase. The chain is Lutropin-choriogonadotropic hormone receptor (Lhcgr) from Mus musculus (Mouse).